The chain runs to 299 residues: Homeobox protein Nkx-2.5 (299 aa).

Over residues 90–119 the composition is skewed to basic and acidic residues; it reads KDPKDHKKDICPLQKTLEHDKREAEDPERP. The disordered stretch occupies residues 90-128; that stretch reads KDPKDHKKDICPLQKTLEHDKREAEDPERPRQRKRRKPR. The segment at residues 124-183 is a DNA-binding region (homeobox); sequence RRKPRVLFSQAQVYELERRFKQQKYLSAPERDHLANVLKLTSTQVKIWFQNRRYKCKRQR.

This sequence belongs to the NK-2 homeobox family. Homodimer (via the homeobox); binds DNA as homodimer. As to expression, heart and gut tissue.

It is found in the nucleus. Transcription factor required for the development of the heart and the spleen. Implicated in commitment to and/or differentiation of the myocardial lineage. May regulate the expression of genes involved in cardiogenesis and play a role in the formation of gut and the pharyngeal region. Binds to the core DNA motif of promoter. In Xenopus laevis (African clawed frog), this protein is Homeobox protein Nkx-2.5 (nkx-2.5).